Reading from the N-terminus, the 587-residue chain is MRLQILLIYLICIIVSSIVLVESSNKHHFKENDEVPFYVNNVGPYSNPTETYEFYTLPFCKPSSISYKKTKLGEILQGDSAVLSDYQFPFKSSFENKQLCEYTLKKEDIEKFKKAIGEYYYAEMIYDDLPIFSFVGTVDDSDLTNIRYYLYNHIPFEFDYNGDQVIRVNIDTEHIKVIELSDQDEITLKLTYSAKWQPTEHEFSKRMDLYEEFFTKELEIHWLSVMNSFFLVVLLTAFLAIMIMKILKNDYSRYSKTDEEEDSDYQEDYGWKLVHGDVFRFPPYKNVFSAFYGIGWQFISIVCGILALSLFGMFYPNNGGNMYTAGIVLYALTSGISGYQSAKMYKNMGGNKWAWNIVLTATLFVAPLFIVVILSNTVAITWHSTVALPILTMIEVITIWLFVGFPLTVVGGIAGRRLSENFEAPCRTKNFPREVPPIQWYRRLPCQILIAGFLPFSAIYIELFYIFNSVWGHSTYTLYGILCLVFLILINVTVCITVALTYFQLSMEDHKWWWNSFINGGSTVVFIYMYSIYYYYYISHMYGLLQATFYFTYMLIVCFFFFILLGTVGFYSSLIFVKRIYRNLKSD.

The signal sequence occupies residues 1–23 (MRLQILLIYLICIIVSSIVLVES). Helical transmembrane passes span 223-243 (LSVMNSFFLVVLLTAFLAIMI), 294-314 (IGWQFISIVCGILALSLFGMF), 319-339 (GGNMYTAGIVLYALTSGISGY), 354-374 (AWNIVLTATLFVAPLFIVVIL), 390-410 (ILTMIEVITIWLFVGFPLTVV), 448-468 (ILIAGFLPFSAIYIELFYIFN), 480-500 (GILCLVFLILINVTVCITVAL), 524-544 (VVFIYMYSIYYYYYISHMYGL), and 556-576 (IVCFFFFILLGTVGFYSSLIF).

The protein belongs to the nonaspanin (TM9SF) (TC 9.A.2) family.

It is found in the membrane. Its function is as follows. Involved in adhesion and phagocytosis of hydrophilic particles. The protein is Putative phagocytic receptor 1b (phg1b) of Dictyostelium discoideum (Social amoeba).